We begin with the raw amino-acid sequence, 1025 residues long: Multidrug resistance protein MdtC (1025 aa).

A run of 12 helical transmembrane segments spans residues 15–35, 333–353, 360–380, 387–407, 431–451, 469–489, 528–548, 851–871, 875–895, 897–917, 953–973, and 984–1004; these read ILISLAITLCGILGFRLLPVA, EVEQTLVISVALVILVVFLFL, LIPAVAVPVSLIGTFAAMYLC, LSLMALTIATGFVVDDAIVVL, VGFTVLSMSLSLVAVFLPLLL, VAIGISLAVSLTLTPMMCGWL, LTGLVVLGTIALSVWLYISIP, AQVILILAAIATVYIVLGVLY, VHPLTILSTLPSAGVGALLAL, IFDAPFSLIALIGIMLLIGIV, PIMMTTLAALFGALPLVLSGG, and ITIVGGLVMSQLLTLYTTPVV.

The protein belongs to the resistance-nodulation-cell division (RND) (TC 2.A.6) family. MdtC subfamily. Part of a tripartite efflux system composed of MdtA, MdtB and MdtC. MdtC forms a heteromultimer with MdtB.

It localises to the cell inner membrane. This chain is Multidrug resistance protein MdtC, found in Klebsiella pneumoniae subsp. pneumoniae (strain ATCC 700721 / MGH 78578).